The primary structure comprises 2324 residues: Acetyl-CoA carboxylase (2324 aa).

Met-1 is modified (N-acetylmethionine). Residues Met-1–Ser-34 are disordered. Residues Ser-78 and Ser-80 each carry the phosphoserine modification. A Biotin carboxylation domain is found at Val-117–Ala-618. The region spanning Gln-275–Met-466 is the ATP-grasp domain. Gly-315–Gly-320 lines the ATP pocket. Mn(2+) is bound by residues Glu-424, Glu-437, and Asn-439. Arg-441 is a catalytic residue. In terms of domain architecture, Biotinyl-binding spans Phe-745–Gln-819. At Lys-786 the chain carries N6-biotinyllysine. Ser-1193 carries the phosphoserine modification. In terms of domain architecture, CoA carboxyltransferase N-terminal spans Pro-1553–Lys-1891. The tract at residues Pro-1553–Asp-2211 is carboxyltransferase. Positions 1800, 2104, and 2106 each coordinate CoA. The CoA carboxyltransferase C-terminal domain maps to Pro-1895 to Asp-2211.

Biotin is required as a cofactor. The cofactor is Mn(2+).

It is found in the cytoplasm. It carries out the reaction hydrogencarbonate + acetyl-CoA + ATP = malonyl-CoA + ADP + phosphate + H(+). The catalysed reaction is N(6)-biotinyl-L-lysyl-[protein] + hydrogencarbonate + ATP = N(6)-carboxybiotinyl-L-lysyl-[protein] + ADP + phosphate + H(+). It functions in the pathway lipid metabolism; malonyl-CoA biosynthesis; malonyl-CoA from acetyl-CoA: step 1/1. Its activity is regulated as follows. By phosphorylation. Functionally, catalyzes the rate-limiting reaction in the biogenesis of long-chain fatty acids. Carries out three functions: biotin carboxyl carrier protein, biotin carboxylase and carboxyltransferase. The polypeptide is Acetyl-CoA carboxylase (ACAC) (Gallus gallus (Chicken)).